Reading from the N-terminus, the 114-residue chain is Large ribosomal subunit protein bL20c (114 aa).

The protein belongs to the bacterial ribosomal protein bL20 family.

The protein resides in the plastid. It is found in the chloroplast. Binds directly to 23S ribosomal RNA and is necessary for the in vitro assembly process of the 50S ribosomal subunit. It is not involved in the protein synthesizing functions of that subunit. This is Large ribosomal subunit protein bL20c (rpl20) from Guillardia theta (Cryptophyte).